The sequence spans 132 residues: Small ribosomal subunit protein uS8 (132 aa).

It belongs to the universal ribosomal protein uS8 family. As to quaternary structure, part of the 30S ribosomal subunit. Contacts proteins S5 and S12.

Functionally, one of the primary rRNA binding proteins, it binds directly to 16S rRNA central domain where it helps coordinate assembly of the platform of the 30S subunit. The protein is Small ribosomal subunit protein uS8 of Flavobacterium psychrophilum (strain ATCC 49511 / DSM 21280 / CIP 103535 / JIP02/86).